Here is a 254-residue protein sequence, read N- to C-terminus: MQLEELINQHYSKLNDNDFHILKYILNHKHTCYHLGIDALAKACSVSRSSILRLAQKLGFSGYSEFRVFLKWEDQPEEGESMSFEKLLDDIEANLKFLRTKDMTDMCQLIDAADRIFVYGSGNAQKICARDLQRMFIPRHRYLILIEDTNEFNLMRDDFKVNDLFIIISLSGETPELIPQARMLSAKGIPFISITNLKNNVLAQLTPHNLYATSKPVTLSDRTEIVAFAPFFLVGEALFRAYVDYKEAEKNDNE.

Residues 1-77 (MQLEELINQH…VFLKWEDQPE (77 aa)) enclose the HTH rpiR-type domain. Residues 37-56 (IDALAKACSVSRSSILRLAQ) constitute a DNA-binding region (H-T-H motif). In terms of domain architecture, SIS spans 106–248 (MCQLIDAADR…FRAYVDYKEA (143 aa)).

Positive regulator of the glv operon expression, which consists of GlvA, GlvR and GlvC. In Bacillus subtilis (strain 168), this protein is HTH-type transcriptional regulator GlvR (glvR).